Reading from the N-terminus, the 727-residue chain is Capsid protein VP1 (727 aa).

Over residues 1–10 (MAPPAKRARR) the composition is skewed to basic residues. 3 disordered regions span residues 1–38 (MAPP…SDAA), 95–120 (VLTD…PPPH), and 141–184 (LAPM…VGIS). The Nuclear localization signal signature appears at 4 to 13 (PAKRARRGLV). Positions 19 to 64 (YLGPGNSLDQGEPTNPSDAAAKEHDEAYAAYLRSGKNPYLYFSPAD) are phospholipase A2-like. The segment covering 25–35 (SLDQGEPTNPS) has biased composition (polar residues). Over residues 166–183 (SGNGSGGGGGGGSGGVGI) the composition is skewed to gly residues. Residue Asn-323 coordinates Mg(2+). Cys-633 and Cys-637 form a disulfide bridge.

It belongs to the parvoviridae capsid protein family. Interacts with host TFRC.

It localises to the virion. The protein resides in the host nucleus. Capsid protein self-assembles to form an icosahedral capsid with a T=1 symmetry, about 22 nm in diameter, and consisting of 60 copies of two size variants of the capsid proteins, VP1 and VP2, which differ by the presence of an N-terminal extension in the minor protein VP1. The capsid encapsulates the genomic ssDNA. Capsid proteins are responsible for the attachment to host cell receptors. This attachment induces virion internalization predominantly through clathrin-dependent endocytosis. Binding to the host receptors also induces capsid rearrangements leading to surface exposure of VP1 N-terminus, specifically its phospholipase A2-like region and putative nuclear localization signal(s). VP1 N-terminus might serve as a lipolytic enzyme to breach the endosomal membrane during entry into host cell and might contribute to virus transport to the nucleus. The sequence is that of Capsid protein VP1 from Feline panleukopenia virus (strain 193) (FPV).